The following is a 1357-amino-acid chain: DNA-directed RNA polymerase subunit beta (1357 aa).

It belongs to the RNA polymerase beta chain family. The RNAP catalytic core consists of 2 alpha, 1 beta, 1 beta' and 1 omega subunit. When a sigma factor is associated with the core the holoenzyme is formed, which can initiate transcription.

The enzyme catalyses RNA(n) + a ribonucleoside 5'-triphosphate = RNA(n+1) + diphosphate. Its function is as follows. DNA-dependent RNA polymerase catalyzes the transcription of DNA into RNA using the four ribonucleoside triphosphates as substrates. In Pseudomonas entomophila (strain L48), this protein is DNA-directed RNA polymerase subunit beta.